We begin with the raw amino-acid sequence, 818 residues long: MESLSPGGPPGHPYQGEASTCWQLTVRVLEARNLRWADLLSEADPYVILQLSTAPGMKFKTKTLTDTSHPVWNEAFRFLIQSQVKNVLELSIYDEDSVTEDDICFKVLYDISEVLPGKLLRKTFSQSPQGEEELDVEFLMEETSDRPENLITNKVIVARELSCLDVHLDSTGSTAVVADQDKLELELVLKGSYEDTQTSFLGTASAFRFHYMAALETELSGRLRSSRSNGWNGDNSAGYLTVPLRPLTIGKEVTMDVPAPNAPGVRLQLKAEGCPEELAVHLGFNLCAEEQAFLSRRKQVVAKALKQALQLDRDLQEDEVPVVGIMATGGGARAMTSLYGHLLALQKLGLLDCVTYFSGISGSTWTMAHLYGDPEWSQRDLEGPIRYAREHLAKSKLEVFSPERLASYRRELELRAEQGHPTTFVDLWALVLESMLHGQVMDQKLSGQRAALERGQNPLPLYLSLNVKENNLETLDFKEWVEFSPYEVGFLKYGAFVPPELFGSEFFMGRLMRRIPEPRICFLEAIWSNIFSLNLLDAWYDLTSSGESWKQHIKDKTRSLEKEPLTTSGTSSRLEASWLQPGTALAQAFKGFLTGRPLHQRSPNFLQGLQLHQDYCSHKDFSTWADYQLDSMPSQLTPKEPRLCLVDAAYFINTSSPSMFRPGRRLDLILSFDYSLSAPFEALQQTELYCRARGLPFPRVEPSPQDQHQPRECHLFSDPACPEAPILLHFPLVNASFKDHSAPGVQRSPAELQGGQVDLTGATCPYTLSNMTYKEEDFERLLRLSDYNVQTSQGAILQALRTALKHRTLEARPPRAQT.

The 120-residue stretch at 5–124 folds into the C2 domain; that stretch reads SPGGPPGHPY…LPGKLLRKTF (120 aa). 5 residues coordinate Ca(2+): Asp38, Asp44, Asp94, Asp96, and Asp102. The 546-residue stretch at 273–818 folds into the PLA2c domain; sequence GCPEELAVHL…LEARPPRAQT (546 aa). Position 330–331 (330–331) interacts with substrate; the sequence is GG. Ser361 functions as the Nucleophile in the catalytic mechanism. Asp647 (proton acceptor) is an active-site residue.

Requires Ca(2+) as cofactor. Expressed in stratified squamous epithelia, such as those in skin and cervix, but not in other tissues. Strongly expressed in the upper spinous layer of the psoriatic epidermis, expressed weakly and discontinuously in atopic dermatitis and mycosis fungoides, and not detected in the epidermis of normal skin.

The protein localises to the cytoplasm. The protein resides in the cytosol. It localises to the membrane. It carries out the reaction a 1,2-diacyl-sn-glycero-3-phosphocholine + H2O = a 1-acyl-sn-glycero-3-phosphocholine + a fatty acid + H(+). It catalyses the reaction 1-hexadecanoyl-2-(5Z,8Z,11Z,14Z-eicosatetraenoyl)-sn-glycero-3-phosphocholine + H2O = 1-hexadecanoyl-sn-glycero-3-phosphocholine + (5Z,8Z,11Z,14Z)-eicosatetraenoate + H(+). The catalysed reaction is 1-hexadecanoyl-2-(9Z,12Z-octadecadienoyl)-sn-glycero-3-phosphocholine + H2O = (9Z,12Z)-octadecadienoate + 1-hexadecanoyl-sn-glycero-3-phosphocholine + H(+). The enzyme catalyses 1-hexadecanoyl-2-(9Z-octadecenoyl)-sn-glycero-3-phosphocholine + H2O = 1-hexadecanoyl-sn-glycero-3-phosphocholine + (9Z)-octadecenoate + H(+). It carries out the reaction 1-hexadecanoyl-2-(5Z,8Z,11Z,14Z-eicosatetraenoyl)-sn-glycero-3-phosphoethanolamine + H2O = 1-hexadecanoyl-sn-glycero-3-phosphoethanolamine + (5Z,8Z,11Z,14Z)-eicosatetraenoate + H(+). It catalyses the reaction 1-hexadecanoyl-2-(9Z,12Z-octadecadienoyl)-sn-glycero-3-phosphoethanolamine + H2O = 1-hexadecanoyl-sn-glycero-3-phosphoethanolamine + (9Z,12Z)-octadecadienoate + H(+). The protein operates within lipid metabolism; fatty acid metabolism. Stimulated by cytosolic Ca(2+). In terms of biological role, calcium-dependent phospholipase A2 that selectively hydrolyzes glycerophospholipids in the sn-2 position. Has a preference for linoleic acid at the sn-2 position. The chain is Cytosolic phospholipase A2 delta from Homo sapiens (Human).